We begin with the raw amino-acid sequence, 428 residues long: Patatin-like protein 3 (428 aa).

The PNPLA domain maps to 38–252 (LSIDGGGIRG…AANNPTLCAI (215 aa)). The GXGXXG signature appears at 42–47 (GGGIRG). Positions 80–84 (GTSTG) match the GXSXG motif. Catalysis depends on Ser82, which acts as the Nucleophile. Catalysis depends on Asp239, which acts as the Proton acceptor. Positions 239 to 241 (DGG) match the DGA/G motif. Residue Ser423 is modified to Phosphoserine.

The protein belongs to the patatin family. Expressed specifically in the stigma, ovary and funiculus of the ovary.

It localises to the cytoplasm. Possesses non-specific lipolytic acyl hydrolase (LAH) activity. Catalyzes the hydrolysis of the neutral lipids monogalactosyldiacylglycerol (MGDG), digalactosyldiacylglycerol (DGDG) and phosphatidylglycerol (PG), and less efficiently the polar lipids phosphatidylcholine (PC) and phosphatidylinositol (PI), but not the storage lipid triacylglycerol (TAG). May play a role in root development. This Arabidopsis thaliana (Mouse-ear cress) protein is Patatin-like protein 3 (PLP3).